A 757-amino-acid polypeptide reads, in one-letter code: MDVNPTLLFLKVPVQNAISTTFPYTGDPPYSHGTGTGYTMDTVNRTHQYSEKGKWTTNTETGAPQLNPIDGPLPEDNEPSGYAQTDCVLEAMAFLEESHPGIFENSCLETMEIVQQTRVDKLTQGRQTYDWTLNRNQPAATALANTIEIFRSNGLTANESGRLIDFLKDVMESMDKEEMEITTHFQRKRRVRDNMTKKMVTQRTIGKKKQRLNKKSYLIRALTLNTMTKDAERGKLKRRAIATPGMQIRGFVYFVETLARGICEKLEQSGLPVGGNEKKAKLANVVRKMMTNSQDTELSFTITGDNTKWNENQNPRMFLAMITYITRNQPEWFRNVLSIAPIMFSNKMARLGKGYMFESKSMKLRTQIPAEMLANIDLKYFNELTKKKIEKIRPLLIDGTASLSPGMMMGMFNMLSTVLGVSILNLGQKRYTKTTYWWDGLQSSDDFALIVNAPNHEGIQAGVDRFYRTCKLVGINMSKKKSYINRTGTFEFTSFFYRYGFVANFSMELPSFGVSGINESADMSIGVTVIKNNMINNDLGPATAQMALQLFIKDYRYTYRCHRGDSQIQTRRSFELKKLWEQTRSKAGLLVSDGGPNLYNIRNLHIPEVCLKWELMDEDYQGRLCNPLNPFVSHKEIESVNNTVVMPAHGPAKSMEYDAVATTHSWIPKRNRSILNTSQRGILEDEQMYQKCCNLFEKFFPSSSYRRPVGISSMVEAMVSRARIDARIDFESGRIKKEEFAEIMKICSTIEELRRQK.

The tract at residues 52–82 (KGKWTTNTETGAPQLNPIDGPLPEDNEPSGY) is disordered. Over residues 55 to 64 (WTTNTETGAP) the composition is skewed to polar residues. 2 short sequence motifs (nuclear localization signal) span residues 187 to 195 (RKRRVRDNM) and 203 to 216 (RTIG…NKKS). The interval 249 to 256 (RGFVYFVE) is promoter-binding site. Positions 286–483 (VRKMMTNSQD…GINMSKKKSY (198 aa)) constitute a RdRp catalytic domain.

This sequence belongs to the influenza viruses polymerase PB1 family. In terms of assembly, influenza RNA polymerase is composed of three subunits: PB1, PB2 and PA. Interacts (via N-terminus) with PA (via C-terminus). Interacts (via C-terminus) with PB2 (via N-terminus); this interaction is essential for transcription initiation. Post-translationally, phosphorylated by host PRKCA.

It localises to the host nucleus. Its subcellular location is the host cytoplasm. The enzyme catalyses RNA(n) + a ribonucleoside 5'-triphosphate = RNA(n+1) + diphosphate. Functionally, RNA-dependent RNA polymerase which is responsible for replication and transcription of virus RNA segments. The transcription of viral mRNAs occurs by a unique mechanism called cap-snatching. 5' methylated caps of cellular mRNAs are cleaved after 10-13 nucleotides by PA. In turn, these short capped RNAs are used as primers by PB1 for transcription of viral mRNAs. During virus replication, PB1 initiates RNA synthesis and copy vRNA into complementary RNA (cRNA) which in turn serves as a template for the production of more vRNAs. This Influenza A virus (strain A/Chicken/Shantou/4231/2003 H5N1 genotype V) protein is RNA-directed RNA polymerase catalytic subunit.